Reading from the N-terminus, the 767-residue chain is Protein SQS1 (767 aa).

The span at Met1–Arg17 shows a compositional bias: basic residues. The disordered stretch occupies residues Met1–Asp60. Residues Thr42–Ile52 show a composition bias toward polar residues. At Ser105 the chain carries Phosphoserine. A compositionally biased stretch (acidic residues) spans Glu176–Ser185. The disordered stretch occupies residues Glu176–Ser200. Ser217, Ser255, Ser334, Ser343, and Ser345 each carry phosphoserine. Residues Tyr466–Ala493 form a disordered region. Over residues Ser474–Met492 the composition is skewed to acidic residues. The R3H domain maps to Gly594–Lys656. Residues Asn720–Ser767 enclose the G-patch domain.

It belongs to the SQS1 family.

The protein localises to the cytoplasm. It localises to the nucleus. In terms of biological role, may be involved in splicing since overexpression antagonizes the suppression of splicing defects by SPP382 mutants. The protein is Protein SQS1 (SQS1) of Saccharomyces cerevisiae (strain YJM789) (Baker's yeast).